Consider the following 524-residue polypeptide: Anthranilate synthase component 1 (524 aa).

L-tryptophan is bound by residues S55 and 297 to 299 (PYM). Position 332–333 (332–333 (GT)) interacts with chorismate. Position 359 (E359) interacts with Mg(2+). Chorismate-binding positions include Y447, R467, 485–487 (GAG), and G487. E500 is a binding site for Mg(2+).

The protein belongs to the anthranilate synthase component I family. In terms of assembly, heterotetramer consisting of two non-identical subunits: a beta subunit (TrpG) and a large alpha subunit (TrpE). Mg(2+) serves as cofactor.

The catalysed reaction is chorismate + L-glutamine = anthranilate + pyruvate + L-glutamate + H(+). The protein operates within amino-acid biosynthesis; L-tryptophan biosynthesis; L-tryptophan from chorismate: step 1/5. Its activity is regulated as follows. Feedback inhibited by tryptophan. In terms of biological role, part of a heterotetrameric complex that catalyzes the two-step biosynthesis of anthranilate, an intermediate in the biosynthesis of L-tryptophan. In the first step, the glutamine-binding beta subunit (TrpG) of anthranilate synthase (AS) provides the glutamine amidotransferase activity which generates ammonia as a substrate that, along with chorismate, is used in the second step, catalyzed by the large alpha subunit of AS (TrpE) to produce anthranilate. In the absence of TrpG, TrpE can synthesize anthranilate directly from chorismate and high concentrations of ammonia. The protein is Anthranilate synthase component 1 (trpE) of Haloferax volcanii (strain ATCC 29605 / DSM 3757 / JCM 8879 / NBRC 14742 / NCIMB 2012 / VKM B-1768 / DS2) (Halobacterium volcanii).